Here is a 244-residue protein sequence, read N- to C-terminus: 5-oxoprolinase subunit A (244 aa).

The protein belongs to the LamB/PxpA family. As to quaternary structure, forms a complex composed of PxpA, PxpB and PxpC.

It catalyses the reaction 5-oxo-L-proline + ATP + 2 H2O = L-glutamate + ADP + phosphate + H(+). Functionally, catalyzes the cleavage of 5-oxoproline to form L-glutamate coupled to the hydrolysis of ATP to ADP and inorganic phosphate. This Escherichia coli O139:H28 (strain E24377A / ETEC) protein is 5-oxoprolinase subunit A.